Here is a 137-residue protein sequence, read N- to C-terminus: Large ribosomal subunit protein uL16c (137 aa).

This sequence belongs to the universal ribosomal protein uL16 family. In terms of assembly, part of the 50S ribosomal subunit.

The protein resides in the plastid. This Cuscuta exaltata (Tall dodder) protein is Large ribosomal subunit protein uL16c.